The chain runs to 168 residues: Ubiquitin-fold modifier-conjugating enzyme 1 (168 aa).

Catalysis depends on cysteine 116, which acts as the Glycyl thioester intermediate.

This sequence belongs to the ubiquitin-conjugating enzyme family. UFC1 subfamily.

Its function is as follows. E2-like enzyme which forms an intermediate with UFM1 via a thioester linkage. The polypeptide is Ubiquitin-fold modifier-conjugating enzyme 1 (Trichoplax adhaerens (Trichoplax reptans)).